Here is a 1200-residue protein sequence, read N- to C-terminus: Nuclear envelope pore membrane protein POM 121 (1200 aa).

The interval 1–29 (MSPAAAAADGGERRRPPLGGREGRSRARG) is disordered. The segment at 1–56 (MSPAAAAADGGERRRPPLGGREGRSRARGYGGPAGAAALGLALLGLALYLVPAAAA) is cisternal side. Residues 10-25 (GGERRRPPLGGREGRS) are compositionally biased toward basic and acidic residues. The helical transmembrane segment at 57–77 (LAWLAVGASAAWWGLSREPRG) threads the bilayer. A pore side region spans residues 76 to 1200 (RGPRALSSFV…QARRQHTRKK (1125 aa)). Serine 83 is modified (phosphoserine). 2 disordered regions span residues 91–167 (HPRP…SAVQ) and 177–196 (PTPL…GPLS). Positions 143-152 (LRQDPRERPG) are enriched in basic and acidic residues. The residue at position 244 (serine 244) is a Phosphoserine. Disordered regions lie at residues 294 to 328 (KKKR…SAFE), 345 to 509 (SLKR…ITAE), 530 to 627 (PDDA…SDSK), 640 to 692 (SITP…LATP), 706 to 744 (PATP…PTFK), 1075 to 1151 (TSGT…SSLS), and 1173 to 1200 (PSFS…TRKK). Over residues 298-312 (TVAEEDQLHLDGQEN) the composition is skewed to basic and acidic residues. Residues serine 319, serine 322, serine 325, serine 345, serine 355, serine 367, and serine 370 each carry the phosphoserine modification. Over residues 365-374 (TSSVSSLASA) the composition is skewed to low complexity. Over residues 379–397 (IPSSSRNAITSSYSSTRGI) the composition is skewed to polar residues. Over residues 404-419 (SGPTSSPFSSPASSRS) the composition is skewed to low complexity. A phosphoserine mark is found at serine 408, serine 409, serine 412, serine 413, serine 416, and serine 417. Basic and acidic residues-rich tracts occupy residues 424–433 (RPAKKTREEE) and 446–456 (TDKESPGEKVT). Low complexity-rich tracts occupy residues 463–477 (QQSS…GSSG), 546–574 (PPFT…PLLE), 581–598 (ESPA…TVAA), and 605–621 (PSLL…PLAS). The segment covering 640 to 657 (SITPLTDSKSSGVSQAEQ) has biased composition (polar residues). Composition is skewed to low complexity over residues 658-669 (SVSTPASTASSP), 681-692 (SPPASSSSLATP), 715-742 (SPLP…TTPT), and 1075-1099 (TSGT…GSLS). A compositionally biased stretch (polar residues) spans 1100–1121 (QNTLGAPSQGSPFAFSVGSTPE). A compositionally biased stretch (basic residues) spans 1190–1200 (LQARRQHTRKK).

The protein belongs to the POM121 family. In terms of processing, proteolytically cleaved by caspase-3 during apoptosis.

It localises to the nucleus. It is found in the nuclear pore complex. The protein resides in the nucleus membrane. Its subcellular location is the endoplasmic reticulum membrane. In terms of biological role, essential component of the nuclear pore complex (NPC). The repeat-containing domain may be involved in anchoring components of the pore complex to the pore membrane. When overexpressed in cells induces the formation of cytoplasmic annulate lamellae (AL). This chain is Nuclear envelope pore membrane protein POM 121 (Pom121), found in Mus musculus (Mouse).